Reading from the N-terminus, the 264-residue chain is Phycocyanobilin:ferredoxin oxidoreductase (264 aa).

The protein belongs to the HY2 family.

It catalyses the reaction (2R,3Z)-phycocyanobilin + 4 oxidized [2Fe-2S]-[ferredoxin] = biliverdin IXalpha + 4 reduced [2Fe-2S]-[ferredoxin] + 4 H(+). Its function is as follows. Catalyzes the four-electron reduction of biliverdin IX-alpha (2-electron reduction at both the A and D rings); the reaction proceeds via an isolatable 2-electron intermediate, 181,182-dihydrobiliverdin. This Prochlorococcus marinus (strain MIT 9313) protein is Phycocyanobilin:ferredoxin oxidoreductase (pcyA).